The following is a 181-amino-acid chain: Large ribosomal subunit protein uL5 (181 aa).

This sequence belongs to the universal ribosomal protein uL5 family. In terms of assembly, part of the 50S ribosomal subunit; part of the 5S rRNA/L5/L18/L25 subcomplex. Contacts the 5S rRNA and the P site tRNA. Forms a bridge to the 30S subunit in the 70S ribosome.

In terms of biological role, this is one of the proteins that bind and probably mediate the attachment of the 5S RNA into the large ribosomal subunit, where it forms part of the central protuberance. In the 70S ribosome it contacts protein S13 of the 30S subunit (bridge B1b), connecting the 2 subunits; this bridge is implicated in subunit movement. Contacts the P site tRNA; the 5S rRNA and some of its associated proteins might help stabilize positioning of ribosome-bound tRNAs. The chain is Large ribosomal subunit protein uL5 from Colwellia psychrerythraea (strain 34H / ATCC BAA-681) (Vibrio psychroerythus).